We begin with the raw amino-acid sequence, 122 residues long: Large ribosomal subunit protein bL12 (122 aa).

It belongs to the bacterial ribosomal protein bL12 family. As to quaternary structure, homodimer. Part of the ribosomal stalk of the 50S ribosomal subunit. Forms a multimeric L10(L12)X complex, where L10 forms an elongated spine to which 2 to 4 L12 dimers bind in a sequential fashion. Binds GTP-bound translation factors.

Functionally, forms part of the ribosomal stalk which helps the ribosome interact with GTP-bound translation factors. Is thus essential for accurate translation. The polypeptide is Large ribosomal subunit protein bL12 (Deinococcus radiodurans (strain ATCC 13939 / DSM 20539 / JCM 16871 / CCUG 27074 / LMG 4051 / NBRC 15346 / NCIMB 9279 / VKM B-1422 / R1)).